A 316-amino-acid polypeptide reads, in one-letter code: Methionyl-tRNA formyltransferase (316 aa).

Residue 111–114 (SLLP) coordinates (6S)-5,6,7,8-tetrahydrofolate.

It belongs to the Fmt family.

It carries out the reaction L-methionyl-tRNA(fMet) + (6R)-10-formyltetrahydrofolate = N-formyl-L-methionyl-tRNA(fMet) + (6S)-5,6,7,8-tetrahydrofolate + H(+). Functionally, attaches a formyl group to the free amino group of methionyl-tRNA(fMet). The formyl group appears to play a dual role in the initiator identity of N-formylmethionyl-tRNA by promoting its recognition by IF2 and preventing the misappropriation of this tRNA by the elongation apparatus. This chain is Methionyl-tRNA formyltransferase, found in Limosilactobacillus fermentum (strain NBRC 3956 / LMG 18251) (Lactobacillus fermentum).